The chain runs to 194 residues: dTTP/UTP pyrophosphatase (194 aa).

Asp73 functions as the Proton acceptor in the catalytic mechanism.

The protein belongs to the Maf family. YhdE subfamily. It depends on a divalent metal cation as a cofactor.

Its subcellular location is the cytoplasm. It carries out the reaction dTTP + H2O = dTMP + diphosphate + H(+). The enzyme catalyses UTP + H2O = UMP + diphosphate + H(+). Functionally, nucleoside triphosphate pyrophosphatase that hydrolyzes dTTP and UTP. May have a dual role in cell division arrest and in preventing the incorporation of modified nucleotides into cellular nucleic acids. This chain is dTTP/UTP pyrophosphatase, found in Geotalea uraniireducens (strain Rf4) (Geobacter uraniireducens).